An 89-amino-acid polypeptide reads, in one-letter code: IPVSRPCGPMPAICCSKPISGGFTITTMTRGRMSGWSWLSAPGWRNICNERSLSPSVRNWFRLRRAHNISDITFYEVLREIDLKEESLR.

This is an uncharacterized protein from Klebsiella aerogenes (Enterobacter aerogenes).